Here is a 442-residue protein sequence, read N- to C-terminus: ATP-dependent RNA helicase SUB2-2 (442 aa).

Residues 58-86 carry the Q motif motif; the sequence is TGFKDFLLKPELARAIIDCGFEHPSEVQQ. Positions 89-264 constitute a Helicase ATP-binding domain; the sequence is IPQSIHGTDV…RRFLQNPLEI (176 aa). 102–109 serves as a coordination point for ATP; the sequence is AKSGLGKT. Residues 211–214 carry the DECD box motif; the sequence is DECD. One can recognise a Helicase C-terminal domain in the interval 292 to 437; it reads KLAQLLDDLE…EFPEEGIDPS (146 aa).

The protein belongs to the DEAD box helicase family. DECD subfamily.

The protein resides in the nucleus. It catalyses the reaction ATP + H2O = ADP + phosphate + H(+). Functionally, ATP-binding RNA helicase involved in transcription elongation and required for the export of mRNA out of the nucleus. SUB2 also plays a role in pre-mRNA splicing and spliceosome assembly. May be involved in rDNA and telomeric silencing, and maintenance of genome integrity. This chain is ATP-dependent RNA helicase SUB2-2 (SUB2-2), found in Vanderwaltozyma polyspora (strain ATCC 22028 / DSM 70294 / BCRC 21397 / CBS 2163 / NBRC 10782 / NRRL Y-8283 / UCD 57-17) (Kluyveromyces polysporus).